The following is a 316-amino-acid chain: Protein C4 (316 aa).

Belongs to the poxviridae OPG031 protein family.

The protein localises to the host cytoplasm. The protein resides in the host nucleus. Plays a role in the inhibition of host NF-kappa-B activation. Mechanistically, blocks the subunit p65/RELA translocation into the host nucleus. The polypeptide is Protein C4 (OPG031) (Vaccinia virus (strain Western Reserve) (VACV)).